A 249-amino-acid polypeptide reads, in one-letter code: MEFRVIIPARFDSTRLPGKALVDIAGKPMIQHVYESAIKSGAEEVVIATDDKRIRQVAEDFGAVVCMTSSDHQSGTERIAEAAVALGFEDDEIIVCLQGDEPLIPPDAIRKLAEDLDEHDNVKVASLCTPITEVDELFNPHSTKVVLNRRNYALYFSHAPIPWGRDTFSDKENLQLNGSHYCHVGIYAYRVGFLEEYLSWDACPAEKMEALEQLRILWHGGRIHMVVAKSKCPPGVDTEEDLERVRAYF.

Belongs to the KdsB family.

It localises to the cytoplasm. The enzyme catalyses 3-deoxy-alpha-D-manno-oct-2-ulosonate + CTP = CMP-3-deoxy-beta-D-manno-octulosonate + diphosphate. It participates in nucleotide-sugar biosynthesis; CMP-3-deoxy-D-manno-octulosonate biosynthesis; CMP-3-deoxy-D-manno-octulosonate from 3-deoxy-D-manno-octulosonate and CTP: step 1/1. The protein operates within bacterial outer membrane biogenesis; lipopolysaccharide biosynthesis. In terms of biological role, activates KDO (a required 8-carbon sugar) for incorporation into bacterial lipopolysaccharide in Gram-negative bacteria. This Coxiella burnetii (strain RSA 331 / Henzerling II) protein is 3-deoxy-manno-octulosonate cytidylyltransferase.